The sequence spans 174 residues: Single-stranded DNA-binding protein 1 (174 aa).

One can recognise an SSB domain in the interval 6-111 (VNKVILVGNL…VVVNVGGTMQ (106 aa)). A DNA-binding region spans residues 55-61 (WHRVVLF). Residues 110–174 (MQMLGGRQGG…PMDFDDDIPF (65 aa)) are disordered. Positions 115–133 (GRQGGGAPAGGGQQQGGWG) are enriched in gly residues. Low complexity predominate over residues 134 to 160 (QPQQPQGGNQFSGGAQSRPQQQAPAAP). Positions 169–174 (DDDIPF) match the Important for interaction with partner proteins motif.

In terms of assembly, homotetramer. Binds PriA via its C-terminus.

In terms of biological role, plays an important role in DNA replication, recombination and repair. Binds to ssDNA and to an array of partner proteins to recruit them to their sites of action during DNA metabolism. Stimulates the ATPase activity of PriA. One tetramer binds to 26 nucleotides (nt) of ssDNA, a 55 nt piece of ssDNA probably binds 2 tetramers. In Klebsiella pneumoniae subsp. pneumoniae (strain ATCC 700721 / MGH 78578), this protein is Single-stranded DNA-binding protein 1.